Reading from the N-terminus, the 369-residue chain is Putative agmatine deiminase 2 (369 aa).

The Amidino-cysteine intermediate role is filled by Cys-356.

The protein belongs to the agmatine deiminase family.

It catalyses the reaction agmatine + H2O = N-carbamoylputrescine + NH4(+). This Listeria monocytogenes serovar 1/2a (strain ATCC BAA-679 / EGD-e) protein is Putative agmatine deiminase 2.